A 101-amino-acid polypeptide reads, in one-letter code: Translation initiation factor IF-1, chloroplastic (101 aa).

Over residues methionine 1–proline 10 the composition is skewed to polar residues. Residues methionine 1–leucine 35 form a disordered region. In terms of domain architecture, S1-like spans lysine 26–arginine 101.

It belongs to the IF-1 family. Component of the 30S ribosomal translation pre-initiation complex which assembles on the 30S ribosome in the order IF-2 and IF-3, IF-1 and N-formylmethionyl-tRNA(fMet); mRNA recruitment can occur at any time during PIC assembly.

The protein resides in the plastid. It is found in the chloroplast. In terms of biological role, one of the essential components for the initiation of protein synthesis. Stabilizes the binding of IF-2 and IF-3 on the 30S subunit to which N-formylmethionyl-tRNA(fMet) subsequently binds. Helps modulate mRNA selection, yielding the 30S pre-initiation complex (PIC). Upon addition of the 50S ribosomal subunit IF-1, IF-2 and IF-3 are released leaving the mature 70S translation initiation complex. The sequence is that of Translation initiation factor IF-1, chloroplastic from Tetradesmus obliquus (Green alga).